Reading from the N-terminus, the 660-residue chain is tRNA 5-methylaminomethyl-2-thiouridine biosynthesis bifunctional protein MnmC (660 aa).

The interval 1-235 is tRNA (mnm(5)s(2)U34)-methyltransferase; sequence MTITRHARID…KWEVLRGTFI (235 aa). The FAD-dependent cmnm(5)s(2)U34 oxidoreductase stretch occupies residues 266-660; it reads IGAGLAGCAT…LRGLIRGGGK (395 aa).

The protein in the N-terminal section; belongs to the methyltransferase superfamily. tRNA (mnm(5)s(2)U34)-methyltransferase family. It in the C-terminal section; belongs to the DAO family. FAD serves as cofactor.

The protein resides in the cytoplasm. It carries out the reaction 5-aminomethyl-2-thiouridine(34) in tRNA + S-adenosyl-L-methionine = 5-methylaminomethyl-2-thiouridine(34) in tRNA + S-adenosyl-L-homocysteine + H(+). Its function is as follows. Catalyzes the last two steps in the biosynthesis of 5-methylaminomethyl-2-thiouridine (mnm(5)s(2)U) at the wobble position (U34) in tRNA. Catalyzes the FAD-dependent demodification of cmnm(5)s(2)U34 to nm(5)s(2)U34, followed by the transfer of a methyl group from S-adenosyl-L-methionine to nm(5)s(2)U34, to form mnm(5)s(2)U34. This Pseudomonas savastanoi pv. phaseolicola (strain 1448A / Race 6) (Pseudomonas syringae pv. phaseolicola (strain 1448A / Race 6)) protein is tRNA 5-methylaminomethyl-2-thiouridine biosynthesis bifunctional protein MnmC.